The following is a 325-amino-acid chain: Diadenosine 5',5'''-P1,P4-tetraphosphate phosphorylase 2 (325 aa).

Residues Lys53, 92-93, Asn148, and 154-157 contribute to the substrate site; these read NK and GSSQ. His161 acts as the Nucleophile in catalysis. Substrate contacts are provided by residues Gln163, 277-279, Met284, and Lys288; that span reads NST.

This sequence belongs to the ATP adenylyltransferase family. As to quaternary structure, monomer. The cofactor is a divalent metal cation.

It is found in the cytoplasm. It localises to the nucleus. It catalyses the reaction ADP + ATP + H(+) = P(1),P(4)-bis(5'-adenosyl) tetraphosphate + phosphate. The catalysed reaction is sulfate + ADP + H(+) = adenosine 5'-phosphosulfate + phosphate. Ap4A phosphorylase catalyzes the phosphorolytic degradation of bis(5'-adenosyl) tetraphosphate (Ap4A) into ADP and ATP. Can also use other Np4N' nucleotides (where N and N' stand for A,C,G or U) as substrates, but prefers A-containing substrates. Cannot catalyze the reverse reaction. Additionally, this enzyme can also catalyze the phosphorolytic degradation of adenosine 5'-phosphosulfate (AMPS) into ADP and sulfate, the reversible exchange reaction between inorganic phosphate and the beta-phosphate of a nucleoside diphosphate (NDP), and the synthesis of Ap4A from AMPS plus ATP. This chain is Diadenosine 5',5'''-P1,P4-tetraphosphate phosphorylase 2, found in Saccharomyces cerevisiae (strain ATCC 204508 / S288c) (Baker's yeast).